The primary structure comprises 55 residues: ATP synthase F(0) complex subunit 8 (55 aa).

A helical transmembrane segment spans residues 10-30 (FPIMMLSWLIFSLIIQPKLLL). Positions 35–55 (NPPSNKTTTTTRSNPWTWPWT) are disordered. Positions 37–55 (PSNKTTTTTRSNPWTWPWT) are enriched in low complexity.

It belongs to the ATPase protein 8 family. As to quaternary structure, component of the ATP synthase complex composed at least of ATP5F1A/subunit alpha, ATP5F1B/subunit beta, ATP5MC1/subunit c (homooctomer), MT-ATP6/subunit a, MT-ATP8/subunit 8, ATP5ME/subunit e, ATP5MF/subunit f, ATP5MG/subunit g, ATP5MK/subunit k, ATP5MJ/subunit j, ATP5F1C/subunit gamma, ATP5F1D/subunit delta, ATP5F1E/subunit epsilon, ATP5PF/subunit F6, ATP5PB/subunit b, ATP5PD/subunit d, ATP5PO/subunit OSCP. ATP synthase complex consists of a soluble F(1) head domain (subunits alpha(3) and beta(3)) - the catalytic core - and a membrane F(0) domain - the membrane proton channel (subunits c, a, 8, e, f, g, k and j). These two domains are linked by a central stalk (subunits gamma, delta, and epsilon) rotating inside the F1 region and a stationary peripheral stalk (subunits F6, b, d, and OSCP).

Its subcellular location is the mitochondrion membrane. Functionally, subunit 8, of the mitochondrial membrane ATP synthase complex (F(1)F(0) ATP synthase or Complex V) that produces ATP from ADP in the presence of a proton gradient across the membrane which is generated by electron transport complexes of the respiratory chain. ATP synthase complex consist of a soluble F(1) head domain - the catalytic core - and a membrane F(1) domain - the membrane proton channel. These two domains are linked by a central stalk rotating inside the F(1) region and a stationary peripheral stalk. During catalysis, ATP synthesis in the catalytic domain of F(1) is coupled via a rotary mechanism of the central stalk subunits to proton translocation. In vivo, can only synthesize ATP although its ATP hydrolase activity can be activated artificially in vitro. Part of the complex F(0) domain. The polypeptide is ATP synthase F(0) complex subunit 8 (Opisthocomus hoazin (Hoatzin)).